A 189-amino-acid chain; its full sequence is Segregation and condensation protein B (189 aa).

The protein belongs to the ScpB family. In terms of assembly, homodimer. Homodimerization may be required to stabilize the binding of ScpA to the Smc head domains. Component of a cohesin-like complex composed of ScpA, ScpB and the Smc homodimer, in which ScpA and ScpB bind to the head domain of Smc. The presence of the three proteins is required for the association of the complex with DNA.

The protein localises to the cytoplasm. Functionally, participates in chromosomal partition during cell division. May act via the formation of a condensin-like complex containing Smc and ScpA that pull DNA away from mid-cell into both cell halves. The chain is Segregation and condensation protein B from Streptococcus sanguinis (strain SK36).